A 109-amino-acid polypeptide reads, in one-letter code: Cell division protein ZapA (109 aa).

Residues 21–99 adopt a coiled-coil conformation; it reads PEQQEALNQA…IEQALLEQGK (79 aa).

This sequence belongs to the ZapA family. Type 1 subfamily. As to quaternary structure, homodimer. Interacts with FtsZ.

It is found in the cytoplasm. Functionally, activator of cell division through the inhibition of FtsZ GTPase activity, therefore promoting FtsZ assembly into bundles of protofilaments necessary for the formation of the division Z ring. It is recruited early at mid-cell but it is not essential for cell division. The chain is Cell division protein ZapA from Pectobacterium atrosepticum (strain SCRI 1043 / ATCC BAA-672) (Erwinia carotovora subsp. atroseptica).